A 720-amino-acid chain; its full sequence is Glycine--tRNA ligase beta subunit (720 aa).

It belongs to the class-II aminoacyl-tRNA synthetase family. As to quaternary structure, tetramer of two alpha and two beta subunits.

Its subcellular location is the cytoplasm. The enzyme catalyses tRNA(Gly) + glycine + ATP = glycyl-tRNA(Gly) + AMP + diphosphate. The polypeptide is Glycine--tRNA ligase beta subunit (Acidovorax ebreus (strain TPSY) (Diaphorobacter sp. (strain TPSY))).